The chain runs to 276 residues: Large ribosomal subunit protein uL2 (276 aa).

2 disordered regions span residues 33–55 (LVEA…RHIG) and 221–276 (RGTA…AKKK).

The protein belongs to the universal ribosomal protein uL2 family. Part of the 50S ribosomal subunit. Forms a bridge to the 30S subunit in the 70S ribosome.

One of the primary rRNA binding proteins. Required for association of the 30S and 50S subunits to form the 70S ribosome, for tRNA binding and peptide bond formation. It has been suggested to have peptidyltransferase activity; this is somewhat controversial. Makes several contacts with the 16S rRNA in the 70S ribosome. The protein is Large ribosomal subunit protein uL2 of Psychrobacter sp. (strain PRwf-1).